Consider the following 228-residue polypeptide: MPLFETIKHTYKHLWSDASTASFRKYPSPERPDILSIDILSKEIDPTTGVLKCTKLIICKGNTPSWLKSILGSGECLFYEETTVDPKNKIMTLKTKNLNFTNILGVDEVCTYEQHPDNEEWTLFTQEATVTSSIFGVARKMEAFCLDRFVANAGKGRKIMEDTIIKVQKEAEESLASFDKTFTSIKHEAEQSFEKAFSTAEDILPIIKLDDKQSQTTQNTQSNNNKKK.

The PRELI/MSF1 domain occupies 1-172 (MPLFETIKHT…TIIKVQKEAE (172 aa)).

It belongs to the slowmo family.

In Dictyostelium discoideum (Social amoeba), this protein is Protein slowmo homolog (slmo).